The sequence spans 273 residues: Putative phosphoenolpyruvate synthase regulatory protein (273 aa).

Residue 153–160 (GVSRCGKT) participates in ADP binding.

Belongs to the pyruvate, phosphate/water dikinase regulatory protein family. PSRP subfamily.

The enzyme catalyses [pyruvate, water dikinase] + ADP = [pyruvate, water dikinase]-phosphate + AMP + H(+). It catalyses the reaction [pyruvate, water dikinase]-phosphate + phosphate + H(+) = [pyruvate, water dikinase] + diphosphate. In terms of biological role, bifunctional serine/threonine kinase and phosphorylase involved in the regulation of the phosphoenolpyruvate synthase (PEPS) by catalyzing its phosphorylation/dephosphorylation. The polypeptide is Putative phosphoenolpyruvate synthase regulatory protein (Pectobacterium atrosepticum (strain SCRI 1043 / ATCC BAA-672) (Erwinia carotovora subsp. atroseptica)).